Reading from the N-terminus, the 77-residue chain is Acyl carrier protein (77 aa).

The Carrier domain maps to 2–77; sequence SDVAEKVKKI…DAIAYIEEKK (76 aa). Ser-37 carries the post-translational modification O-(pantetheine 4'-phosphoryl)serine.

Belongs to the acyl carrier protein (ACP) family. 4'-phosphopantetheine is transferred from CoA to a specific serine of apo-ACP by AcpS. This modification is essential for activity because fatty acids are bound in thioester linkage to the sulfhydryl of the prosthetic group.

The protein localises to the cytoplasm. It participates in lipid metabolism; fatty acid biosynthesis. Carrier of the growing fatty acid chain in fatty acid biosynthesis. In Desulfovibrio desulfuricans (strain ATCC 27774 / DSM 6949 / MB), this protein is Acyl carrier protein.